A 160-amino-acid chain; its full sequence is Methyl-coenzyme M reductase operon protein D (160 aa).

As to quaternary structure, MCR is composed of three subunits: alpha, beta, and gamma. The function of proteins C and D is not known.

In Methanococcus vannielii, this protein is Methyl-coenzyme M reductase operon protein D (mcrD).